A 155-amino-acid chain; its full sequence is Small ribosomal subunit protein uS7cz/uS7cy (155 aa).

Belongs to the universal ribosomal protein uS7 family. In terms of assembly, part of the 30S ribosomal subunit.

It is found in the plastid. Its subcellular location is the chloroplast. Its function is as follows. One of the primary rRNA binding proteins, it binds directly to 16S rRNA where it nucleates assembly of the head domain of the 30S subunit. This is Small ribosomal subunit protein uS7cz/uS7cy (rps7-A) from Acorus calamus var. americanus (American sweet flag).